The primary structure comprises 308 residues: Glycine--tRNA ligase alpha subunit (308 aa).

This sequence belongs to the class-II aminoacyl-tRNA synthetase family. Tetramer of two alpha and two beta subunits.

The protein localises to the cytoplasm. It catalyses the reaction tRNA(Gly) + glycine + ATP = glycyl-tRNA(Gly) + AMP + diphosphate. In Polaromonas naphthalenivorans (strain CJ2), this protein is Glycine--tRNA ligase alpha subunit.